The sequence spans 217 residues: ATP phosphoribosyltransferase (217 aa).

The protein belongs to the ATP phosphoribosyltransferase family. Short subfamily. As to quaternary structure, heteromultimer composed of HisG and HisZ subunits.

Its subcellular location is the cytoplasm. It carries out the reaction 1-(5-phospho-beta-D-ribosyl)-ATP + diphosphate = 5-phospho-alpha-D-ribose 1-diphosphate + ATP. Its pathway is amino-acid biosynthesis; L-histidine biosynthesis; L-histidine from 5-phospho-alpha-D-ribose 1-diphosphate: step 1/9. Functionally, catalyzes the condensation of ATP and 5-phosphoribose 1-diphosphate to form N'-(5'-phosphoribosyl)-ATP (PR-ATP). Has a crucial role in the pathway because the rate of histidine biosynthesis seems to be controlled primarily by regulation of HisG enzymatic activity. The protein is ATP phosphoribosyltransferase of Polaromonas naphthalenivorans (strain CJ2).